Reading from the N-terminus, the 588-residue chain is Sulfite reductase [NADPH] hemoprotein beta-component (588 aa).

Residues C442, C448, C487, and C491 each contribute to the [4Fe-4S] cluster site. Residue C491 participates in siroheme binding.

It belongs to the nitrite and sulfite reductase 4Fe-4S domain family. As to quaternary structure, alpha(8)-beta(8). The alpha component is a flavoprotein, the beta component is a hemoprotein. It depends on siroheme as a cofactor. [4Fe-4S] cluster serves as cofactor.

The enzyme catalyses hydrogen sulfide + 3 NADP(+) + 3 H2O = sulfite + 3 NADPH + 4 H(+). Its pathway is sulfur metabolism; hydrogen sulfide biosynthesis; hydrogen sulfide from sulfite (NADPH route): step 1/1. Component of the sulfite reductase complex that catalyzes the 6-electron reduction of sulfite to sulfide. This is one of several activities required for the biosynthesis of L-cysteine from sulfate. The sequence is that of Sulfite reductase [NADPH] hemoprotein beta-component from Actinobacillus pleuropneumoniae serotype 5b (strain L20).